Here is a 281-residue protein sequence, read N- to C-terminus: Aminoglycoside N(3)-acetyltransferase IX (281 aa).

The protein belongs to the antibiotic N-acetyltransferase family.

The catalysed reaction is a 2-deoxystreptamine antibiotic + acetyl-CoA = an N(3)-acetyl-2-deoxystreptamine antibiotic + CoA + H(+). Its function is as follows. Resistance to neomycin. This chain is Aminoglycoside N(3)-acetyltransferase IX (aacC9), found in Micromonospora chalcea.